We begin with the raw amino-acid sequence, 116 residues long: Large ribosomal subunit protein uL18 (116 aa).

It belongs to the universal ribosomal protein uL18 family. In terms of assembly, part of the 50S ribosomal subunit; part of the 5S rRNA/L5/L18/L25 subcomplex. Contacts the 5S and 23S rRNAs.

This is one of the proteins that bind and probably mediate the attachment of the 5S RNA into the large ribosomal subunit, where it forms part of the central protuberance. The chain is Large ribosomal subunit protein uL18 from Shewanella oneidensis (strain ATCC 700550 / JCM 31522 / CIP 106686 / LMG 19005 / NCIMB 14063 / MR-1).